Consider the following 1093-residue polypeptide: Synaptopodin-2 (1093 aa).

An interaction with VPS18 region spans residues 1–180 (MGTGDFICIS…PDSQRGRVAE (180 aa)). The 83-residue stretch at 6–88 (FICISMTGGA…SLQMLIKRPS (83 aa)) folds into the PDZ domain. Disordered regions lie at residues 144–174 (ENQR…PDSQ) and 211–233 (ASGP…DPNL). A compositionally biased stretch (basic and acidic residues) spans 222–233 (EKSKSPDPDPNL). 4 positions are modified to phosphoserine: Ser274, Ser310, Ser329, and Ser330. Residues 329–369 (SSEGTEQGEDPRSEKDHSRPHKHRARHARLRRSESLSEKQV) form a disordered region. Thr333 is subject to Phosphothreonine. Positions 346–358 (SRPHKHRARHARL) are enriched in basic residues. The segment covering 359–369 (RRSESLSEKQV) has biased composition (basic and acidic residues). Residues 398 to 406 (KKRRRRARK) carry the Nuclear localization signal motif. Interaction with ACTN2 regions lie at residues 481-663 (MEML…FYDS), 664-924 (SERI…PPVA), and 901-1093 (QSPT…VVEE). Disordered stretches follow at residues 507–803 (AQKE…GTVV) and 834–870 (AVAS…GMSG). F-actin binding stretches follow at residues 534 to 663 (TSYQ…FYDS) and 664 to 803 (SERI…GTVV). Phosphoserine occurs at positions 548, 549, and 551. Polar residues-rich tracts occupy residues 565 to 579 (PQQN…TANI) and 595 to 611 (SVNQ…NMTS). Ser604 is subject to Phosphoserine. The interval 607 to 811 (RNMTSPIADF…VVSSIKIAQP (205 aa)) is interaction with YWHAB. Residue Thr610 is modified to Phosphothreonine. The residue at position 611 (Ser611) is a Phosphoserine. Residues 615-626 (DFPAPPPYSAVT) are interaction with BAG3. Pro residues-rich tracts occupy residues 617–630 (PAPP…PPPD) and 644–655 (AQPPPWPQPAPW). Positions 619–622 (PPPY) match the PPPY motif motif. Residue Tyr622 is modified to Phosphotyrosine. Thr626 carries the phosphothreonine modification. The span at 663–674 (SSERIASRDERI) shows a compositional bias: basic and acidic residues. Residues 664 to 916 (SERIASRDER…LPASWKYSSN (253 aa)) are F-actin bundling activity. 2 positions are modified to phosphoserine: Ser705 and Ser729. An actin binding region spans residues 751–900 (AKQKTPPPVA…DTVQAHAARA (150 aa)). Thr755 and Thr774 each carry phosphothreonine. Residues 762 to 784 (KPAVKSSSSQPVTPVSPVWSPGV) are compositionally biased toward low complexity. A phosphoserine mark is found at Ser777 and Ser781. Polar residues-rich tracts occupy residues 793 to 803 (PTSNPSKGTVV) and 835 to 853 (VASQ…TVNA). Positions 810–1093 (QPSYPPARPA…QVWKPSVVEE (284 aa)) are interaction with FLNC. Ser902, Ser906, and Ser910 each carry phosphoserine. The tract at residues 937–956 (ALKSQPSAAQPSKMGKKKGK) is disordered. Residues 1000–1019 (LAMKQALPPRPVNAASPTNV) form an interaction with ZYX region. A Phosphoserine modification is found at Ser1015. Positions 1041 to 1050 (SSPVSASPVP) are enriched in low complexity. The segment at 1041-1064 (SSPVSASPVPVGIPTSPKQESASS) is disordered. Position 1056 is a phosphoserine (Ser1056).

The protein belongs to the synaptopodin family. As to quaternary structure, may self-associate in muscle cells under oxidative stress. Binds F-actin. Interacts with ACTN2; ACTN2 is proposed to anchor SYOP2 at Z lines in mature myocytes. Interacts with AKAP6, PPP3CA and CAMK2A. Interacts (phosphorylated form) with YWHAB; YWHAB competes with ACTN2 for interaction with SYNPO2. Interacts with KPNA2; mediating nuclear import of SYNOP2; dependent on interaction with YWHAB. Interacts with IPO13; may be implicated in SYNOP2 nuclear import. Interacts with ZYX, FLNC, ILK. Interacts with BAG3 (via WW 1 domain). May associate with the CASA complex consisting of HSPA8, HSPB8 and BAG3. Interacts with VPS18. Phosphorylated by PKA, and by CaMK2 at multiple sites. Dephosphorylated by calcineurin; abrogating interaction with YWHAB and impairing nuclear import. Phosphorylated by ILK. As to expression, expressed in heart muscle. Isoform 5 is specifically expressed in skeletal muscle.

The protein resides in the nucleus. It localises to the cytoplasm. It is found in the cytoskeleton. The protein localises to the myofibril. Its subcellular location is the sarcomere. The protein resides in the z line. It localises to the cell junction. It is found in the focal adhesion. Functionally, has an actin-binding and actin-bundling activity. Can induce the formation of F-actin networks in an isoform-specific manner. At the sarcomeric Z lines is proposed to act as adapter protein that links nascent myofibers to the sarcolemma via ZYX and may play a role in early assembly and stabilization of the Z lines. Involved in autophagosome formation. May play a role in chaperone-assisted selective autophagy (CASA) involved in Z lines maintenance in striated muscle under mechanical tension; may link the client-processing CASA chaperone machinery to a membrane-tethering and fusion complex providing autophagosome membranes. Involved in regulation of cell migration. May be a tumor suppressor. Involved in regulation of cell migration. Can induce formation of thick, irregular actin bundles in the cell body. Its function is as follows. Involved in regulation of cell migration. Can induce long, well-organized actin bundles frequently orientated in parallel along the long axis of the cell showing characteristics of contractile ventral stress fibers. In terms of biological role, involved in regulation of cell migration. Can induce an amorphous actin meshwork throughout the cell body containing a mixture of long and short, randomly organized thick and thin actin bundles. Functionally, can induce long, well-organized actin bundles frequently orientated in parallel along the long axis of the cell showing characteristics of contractile ventral stress fibers. Involved in regulation of cell migration in part dependent on the Rho-ROCK cascade; can promote formation of nascent focal adhesions, actin bundles at the leading cell edge and lamellipodia. Can induce formation of thick, irregular actin bundles in the cell body; the induced actin network is associated with enhanced cell migration in vitro. This Homo sapiens (Human) protein is Synaptopodin-2 (SYNPO2).